A 135-amino-acid chain; its full sequence is uncharacterized protein (135 aa).

One can recognise a Response regulatory domain in the interval 13-129 (QVLIAENSRF…KILEKVNAAI (117 aa)). Residue D64 is modified to 4-aspartylphosphate.

This is an uncharacterized protein from Leptospira interrogans serogroup Icterohaemorrhagiae serovar copenhageni (strain Fiocruz L1-130).